The chain runs to 347 residues: Melanoma-associated antigen B1 (347 aa).

Basic residues predominate over residues 1-17; sequence MPRGQKSKLRAREKRRK. Residues 1–104 form a disordered region; it reads MPRGQKSKLR…QATTSTESSV (104 aa). Polar residues-rich tracts occupy residues 39–53 and 89–102; these read PSSS…TSSP and ENAS…STES. The region spanning 108-307 is the MAGE domain; the sequence is VAWEAGMLMH…RDFPSHYEEA (200 aa). Residues 315–347 form a disordered region; it reads AQVRSSVRARRRTTATTFRARSRAPFSRSSHPM. The span at 328-347 shows a compositional bias: low complexity; that stretch reads TATTFRARSRAPFSRSSHPM.

In terms of tissue distribution, expressed only in testis.

This Homo sapiens (Human) protein is Melanoma-associated antigen B1 (MAGEB1).